Reading from the N-terminus, the 346-residue chain is MPMSAETTSLPAALPIALDAAGGDHGVTPNVEGAVQAARAGVPVLLVGPRVALHAELGKHAGSASLPLTVVDAPDVIGMDEHASDVRSRSGASINVCTQLVKEGKAAAAVSMGHSGATMASALLTLGRLKGVDRPAILTHLPSKKGFVTLLDVGANADVKPVYLAQWARLATVYLQVVEGVQDPTVGLLSIGEEDHKGSQLVLAAHALLRELDGHSIHFYGNVEGRDILQGTTDIVVTDGFTGNVVLKLAEGEAKVLFGWVREALGSRLQTKIGALLVRGALRGLAERMDPSTYGASILLGVRGLTLIGHGSADARAVKNALLRASRAYEAKLIERLEAALTPQDG.

It belongs to the PlsX family. Homodimer. Probably interacts with PlsY.

The protein resides in the cytoplasm. The catalysed reaction is a fatty acyl-[ACP] + phosphate = an acyl phosphate + holo-[ACP]. It participates in lipid metabolism; phospholipid metabolism. Catalyzes the reversible formation of acyl-phosphate (acyl-PO(4)) from acyl-[acyl-carrier-protein] (acyl-ACP). This enzyme utilizes acyl-ACP as fatty acyl donor, but not acyl-CoA. This Deinococcus geothermalis (strain DSM 11300 / CIP 105573 / AG-3a) protein is Phosphate acyltransferase.